Consider the following 959-residue polypeptide: ATP-dependent 6-phosphofructokinase subunit beta (959 aa).

The N-terminal catalytic PFK domain 1 stretch occupies residues 2 to 573; the sequence is TVTTPFVNGT…HLNNFMAINS (572 aa). A disordered region spans residues 144-167; it reads KNAVSTKPTPPPAPEASAESGLSS. Phosphothreonine is present on threonine 152. Positions 158 to 167 are enriched in low complexity; the sequence is EASAESGLSS. A phosphoserine mark is found at serine 163 and serine 171. ATP-binding positions include glycine 206, 270-271, and 300-303; these read RC and GDGS. Aspartate 301 lines the Mg(2+) pocket. Residues 346-348, arginine 383, 390-392, glutamate 447, arginine 475, and 481-484 contribute to the beta-D-fructose 6-phosphate site; these read SID, MGR, and HVQR. Aspartate 348 acts as the Proton acceptor in catalysis. The segment at 574-587 is interdomain linker; that stretch reads ADHNEPKLPKDKRL. Residues 588–959 are C-terminal regulatory PFK domain 2; it reads KIAIVNVGAP…DHLVGRKRVD (372 aa). Beta-D-fructose 2,6-bisphosphate-binding positions include arginine 658, 716-720, arginine 754, and 761-763; these read TLSNN and QGG. Serine 803 carries the phosphoserine modification. Beta-D-fructose 2,6-bisphosphate is bound by residues lysine 847, 853 to 856, and arginine 935; that span reads HVQQ.

Belongs to the phosphofructokinase type A (PFKA) family. ATP-dependent PFK group I subfamily. Eukaryotic two domain clade 'E' sub-subfamily. Heterooctamer of 4 alpha and 4 beta chains. Requires Mg(2+) as cofactor.

It localises to the cytoplasm. Its subcellular location is the mitochondrion outer membrane. It carries out the reaction beta-D-fructose 6-phosphate + ATP = beta-D-fructose 1,6-bisphosphate + ADP + H(+). Its pathway is carbohydrate degradation; glycolysis; D-glyceraldehyde 3-phosphate and glycerone phosphate from D-glucose: step 3/4. With respect to regulation, allosterically activated by ADP, AMP, or fructose 2,6-bisphosphate, and allosterically inhibited by ATP or citrate. Functionally, catalyzes the phosphorylation of D-fructose 6-phosphate to fructose 1,6-bisphosphate by ATP, the first committing step of glycolysis. The polypeptide is ATP-dependent 6-phosphofructokinase subunit beta (PFK2) (Saccharomyces cerevisiae (strain ATCC 204508 / S288c) (Baker's yeast)).